The following is a 477-amino-acid chain: Glycogen synthase (477 aa).

Lys-15 provides a ligand contact to ADP-alpha-D-glucose.

It belongs to the glycosyltransferase 1 family. Bacterial/plant glycogen synthase subfamily.

It carries out the reaction [(1-&gt;4)-alpha-D-glucosyl](n) + ADP-alpha-D-glucose = [(1-&gt;4)-alpha-D-glucosyl](n+1) + ADP + H(+). Its pathway is glycan biosynthesis; glycogen biosynthesis. Synthesizes alpha-1,4-glucan chains using ADP-glucose. The protein is Glycogen synthase of Klebsiella pneumoniae (strain 342).